A 690-amino-acid chain; its full sequence is Serotransferrin-1 (690 aa).

Residues Met1–Ala18 form the signal peptide. Transferrin-like domains are found at residues Val25–Lys329 and Ile340–Lys669. Cys28 and Cys50 are disulfide-bonded. Residues Asp74 and Tyr104 each coordinate Fe(3+). 3 disulfides stabilise this stretch: Cys127–Cys207, Cys172–Cys186, and Cys235–Cys249. Residues Thr129, Ser134, Gly136, and Trp137 each coordinate hydrogencarbonate. Residue Asn169 is glycosylated (N-linked (GlcNAc...) asparagine). Tyr201 is a Fe(3+) binding site. His257 is a Fe(3+) binding site. 2 disulfide bridges follow: Cys343-Cys379 and Cys353-Cys370. Residues Asp394 and Tyr428 each contribute to the Fe(3+) site. Intrachain disulfides connect Cys404/Cys681, Cys419/Cys642, Cys451/Cys529, Cys475/Cys670, Cys485/Cys499, Cys496/Cys512, and Cys569/Cys583. 4 residues coordinate hydrogencarbonate: Thr453, Arg457, Ala459, and Gly460. Residue Tyr523 coordinates Fe(3+). His591 lines the Fe(3+) pocket.

This sequence belongs to the transferrin family. As to quaternary structure, monomer. Abundant in liver and serum with smaller amounts found in the stomach and kidney.

The protein resides in the secreted. Transferrins are iron binding transport proteins which can bind two Fe(3+) ions in association with the binding of an anion, usually bicarbonate. It is responsible for the transport of iron from sites of absorption and heme degradation to those of storage and utilization. Serum transferrin may also have a further role in stimulating cell proliferation. In Salmo salar (Atlantic salmon), this protein is Serotransferrin-1 (tf1).